We begin with the raw amino-acid sequence, 632 residues long: Pheromone-processing carboxypeptidase kex1 (632 aa).

An N-terminal signal peptide occupies residues 1-38 (MLLTAPSSRGSRTQSGIANVSWWALSLLLLFSPTLVSA). The Lumenal segment spans residues 39-523 (KSAADYYVRS…KETEWKAYAK (485 aa)). 2 N-linked (GlcNAc...) asparagine glycosylation sites follow: Asn-119 and Asn-126. Catalysis depends on residues Ser-190 and Asp-390. Asn-441 and Asn-449 each carry an N-linked (GlcNAc...) asparagine glycan. The active site involves His-452. The interval 480-507 (KPADSRIDGEKLPQTSVGGHPNSTAAEQ) is disordered. The segment covering 492 to 506 (PQTSVGGHPNSTAAE) has biased composition (polar residues). N-linked (GlcNAc...) asparagine glycosylation is present at Asn-501. The chain crosses the membrane as a helical span at residues 524–544 (SGEAALIVVIIGVTVWGFFIW). At 545–632 (RSRRRNRGYQ…SSTKPGGAQP (88 aa)) the chain is on the cytoplasmic side. A disordered region spans residues 568 to 632 (ERFHNKRSGP…SSTKPGGAQP (65 aa)). Residues 581–590 (EAGDFDESEL) show a composition bias toward acidic residues.

The protein belongs to the peptidase S10 family.

The protein localises to the golgi apparatus. It localises to the trans-Golgi network membrane. It catalyses the reaction Preferential release of a C-terminal arginine or lysine residue.. Its function is as follows. Protease with a carboxypeptidase B-like function involved in the C-terminal processing of the lysine and arginine residues from protein precursors. Promotes cell fusion and is involved in the programmed cell death. The polypeptide is Pheromone-processing carboxypeptidase kex1 (kex1) (Neosartorya fischeri (strain ATCC 1020 / DSM 3700 / CBS 544.65 / FGSC A1164 / JCM 1740 / NRRL 181 / WB 181) (Aspergillus fischerianus)).